Consider the following 448-residue polypeptide: Trigger factor (448 aa).

The PPIase FKBP-type domain occupies 172–257 (GDRVTVDFVG…MKKIEWPHLP (86 aa)).

It belongs to the FKBP-type PPIase family. Tig subfamily.

Its subcellular location is the cytoplasm. It catalyses the reaction [protein]-peptidylproline (omega=180) = [protein]-peptidylproline (omega=0). Functionally, involved in protein export. Acts as a chaperone by maintaining the newly synthesized protein in an open conformation. Functions as a peptidyl-prolyl cis-trans isomerase. The protein is Trigger factor of Burkholderia lata (strain ATCC 17760 / DSM 23089 / LMG 22485 / NCIMB 9086 / R18194 / 383).